Reading from the N-terminus, the 572-residue chain is Transcription factor E3 (572 aa).

Ser-47 carries the phosphoserine; by MTOR modification. Low complexity predominate over residues 87–125 (TTPATLSASSSAGGSRTPAMSSSSSRVLLRQQLMRAQAQ). Positions 87-152 (TTPATLSASS…SPAPASPAIS (66 aa)) are disordered. The segment covering 126-135 (EQERRERREQ) has biased composition (basic and acidic residues). Arg-187 carries the asymmetric dimethylarginine modification. Residues 210 to 248 (LASQALTPPPGPSSAQPLPAPETAHATGPTGSAPNSPMA) form a disordered region. The tract at residues 259–270 (EIDDVIDEIISL) is strong transcription activation domain. Ser-320 is modified (phosphoserine; by MTOR). Residue Lys-338 forms a Glycyl lysine isopeptide (Lys-Gly) (interchain with G-Cter in SUMO2) linkage. The bHLH domain maps to 345–398 (QKKDNHNLIERRRRFNINDRIKELGTLIPKSNDPEMRWNKGTILKASVDYIRKL). Residues 355–358 (RRRR) carry the Nuclear localization signal motif. The tract at residues 408–429 (LESRQRSLEQANRSLQLRIQEL) is leucine-zipper. Disordered regions lie at residues 439 to 495 (PVPP…APPS) and 530 to 572 (VGGL…EEES). Residues 446–457 (LLSLTTSSVSDS) are compositionally biased toward low complexity. 6 positions are modified to phosphoserine: Ser-539, Ser-545, Ser-551, Ser-553, Ser-557, and Ser-565. Residues 543-572 (AASDPLLSSVSPAVSKASSRRSSFSMEEES) show a composition bias toward low complexity.

It belongs to the MiT/TFE family. Homodimer and heterodimer; with TFEB or MITF. Interacts with RRAGC/RagC GDP-bound and RRAGD/RagD GDP-bound; promoting its recruitment to lysosomal membrane in the presence of nutrients. Interacts with TSC22D1; the interaction is enhanced in the presence of TGF-beta. Sumoylated; does not affect dimerization with MITF. In terms of processing, phosphorylation ar Ser-47 and Ser-320 by MTOR via non-canonical mTORC1 pathway regulates its stability and subcellular location, respectively. When nutrients are present, phosphorylation by MTOR at Ser-47 promotes ubiquitination by the SCF(BTRC) complex, followed by degradation. When nutrients are present, phosphorylation by MTOR at Ser-320 also promotes association with 14-3-3/YWHA adapters and retention in the cytosol. Phosphorylation at Ser-47 plays a more critical role than phosphorylation at Ser-320 for TFE3 inactivation. Inhibition of mTORC1, starvation and lysosomal disruption, promotes dephosphorylation and transcription factor activity. Post-translationally, ubiquitinated by the SCF(BTRC) and SCF(FBXW11) complexes following phosphorylation at Ser-47 by MTOR, leading to its degradation by the proteasome. As to expression, widely expressed.

It is found in the cytoplasm. Its subcellular location is the cytosol. The protein resides in the nucleus. It localises to the lysosome membrane. In terms of biological role, transcription factor that acts as a master regulator of lysosomal biogenesis and immune response. Specifically recognizes and binds E-box sequences (5'-CANNTG-3'); efficient DNA-binding requires dimerization with itself or with another MiT/TFE family member such as TFEB or MITF. Involved in the cellular response to amino acid availability by acting downstream of MTOR: in the presence of nutrients, TFE3 phosphorylation by MTOR promotes its inactivation. Upon starvation or lysosomal stress, inhibition of MTOR induces TFE3 dephosphorylation, resulting in transcription factor activity. Specifically recognizes and binds the CLEAR-box sequence (5'-GTCACGTGAC-3') present in the regulatory region of many lysosomal genes, leading to activate their expression, thereby playing a central role in expression of lysosomal genes. Maintains the pluripotent state of embryonic stem cells by promoting the expression of genes such as ESRRB; mTOR-dependent TFE3 cytosolic retention and inactivation promotes exit from pluripotency. Required to maintain the naive pluripotent state of hematopoietic stem cell; mTOR-dependent cytoplasmic retention of TFE3 promotes the exit of hematopoietic stem cell from pluripotency. TFE3 activity is also involved in the inhibition of neuronal progenitor differentiation. Acts as a positive regulator of browning of adipose tissue by promoting expression of target genes; mTOR-dependent phosphorylation promotes cytoplasmic retention of TFE3 and inhibits browning of adipose tissue. In association with TFEB, activates the expression of CD40L in T-cells, thereby playing a role in T-cell-dependent antibody responses in activated CD4(+) T-cells and thymus-dependent humoral immunity. Specifically recognizes the MUE3 box, a subset of E-boxes, present in the immunoglobulin enhancer. It also binds very well to a USF/MLTF site. Promotes TGF-beta-induced transcription of COL1A2; via its interaction with TSC22D1 at E-boxes in the gene proximal promoter. May regulate lysosomal positioning in response to nutrient deprivation by promoting the expression of PIP4P1. The sequence is that of Transcription factor E3 from Mus musculus (Mouse).